The sequence spans 588 residues: Solute carrier family 2, facilitated glucose transporter member 12 (588 aa).

At 1-28 the chain is on the cytoplasmic side; sequence MLAHSTAQDLILQQRSSDDHPQTNPRQT. The helical transmembrane segment at 29-49 threads the bilayer; the sequence is GCGAFIILSSVIAAISGLLVG. Topologically, residues 50 to 74 are extracellular; that stretch reads YELGIISGALLQLQSLLELTCQQQE. A helical transmembrane segment spans residues 75 to 95; sequence IVVSALLIGALVASLVGGCLI. The Cytoplasmic portion of the chain corresponds to 96-103; the sequence is DLYGRRTT. Residues 104-124 traverse the membrane as a helical segment; it reads IIFTSILLVFANLLPVVVVSY. Residues 125–131 are Extracellular-facing; that stretch reads GSLIAGR. The chain crosses the membrane as a helical span at residues 132–152; the sequence is IFIGVSISLSAIATCVYIAEL. Topologically, residues 153 to 158 are cytoplasmic; that stretch reads SPQDKR. A helical transmembrane segment spans residues 159–179; the sequence is GMLVSLNELMIVAGILLAYIC. Residues 180-191 lie on the Extracellular side of the membrane; that stretch reads NYLFASVNNGWK. Residues 192–212 form a helical membrane-spanning segment; sequence YMFGLITPLAALQAVAMFFLP. At 213-272 the chain is on the cytoplasmic side; the sequence is RSPRFLIMKGYDDAAGKVLQKLRATTDINEELTAIKSSIKAEYQYKFLDLFCSRDNMRAR. Residues 273 to 293 form a helical membrane-spanning segment; sequence LLIGLTLSFFVQITGQPNILF. Over 294–311 the chain is Extracellular; that stretch reads YASTVLKSVGFQSTEAAS. A helical transmembrane segment spans residues 312–332; it reads LASTGIGVVKVVSTIPAIFLV. Residues 333-339 lie on the Cytoplasmic side of the membrane; that stretch reads DKIGSKT. Residues 340-360 form a helical membrane-spanning segment; the sequence is FLCIGSAVMAVSLVSVGLVSL. Residues 361 to 459 lie on the Extracellular side of the membrane; the sequence is QLDVNYNNIC…IPEYMKWLCL (99 aa). N-linked (GlcNAc...) asparagine glycosylation is found at Asn-377, Asn-395, and Asn-419. A helical transmembrane segment spans residues 460–480; that stretch reads SSLLAFVAAFSIGLGPMAWLV. Over 481 to 492 the chain is Cytoplasmic; the sequence is QSEIFPAGIKGR. The helical transmembrane segment at 493–513 threads the bilayer; it reads AFAITSSMNWGMNLLISLTFL. Residues 514–522 are Extracellular-facing; that stretch reads TLTEMIGLP. Residues 523–543 form a helical membrane-spanning segment; it reads WMLFGYALMSIASLVFVIMFV. Residues 544 to 588 lie on the Cytoplasmic side of the membrane; the sequence is PNTKGRPLEEISKELANRSYMCNAVCHRRRSKKKLTPVALIQSPA.

The protein belongs to the major facilitator superfamily. Sugar transporter (TC 2.A.1.1) family. Glucose transporter subfamily.

It is found in the cell membrane. The protein localises to the endomembrane system. The protein resides in the cytoplasm. Its subcellular location is the perinuclear region. The enzyme catalyses D-glucose(out) = D-glucose(in). Functionally, insulin-regulated facilitative glucose transporter. This Xenopus laevis (African clawed frog) protein is Solute carrier family 2, facilitated glucose transporter member 12.